The following is a 153-amino-acid chain: Jacalin-related lectin Calsepa (153 aa).

Ala-2 carries the post-translational modification N-acetylalanine. The region spanning 6–152 is the Jacalin-type lectin domain; that stretch reads DTISGPWGNN…VDAIGTYNRH (147 aa). N-glycan binding regions lie at residues 17 to 18, 95 to 96, and 140 to 144; these read GN, DN, and GYYVD.

It belongs to the jacalin lectin family. Homodimer. Post-translationally, not glycosylated. In terms of tissue distribution, rhizome (at protein level). Detected in the cortex and the pith of rhizome. Not detected in vascular tissues, pericycle, endodermis or rhizodermis.

It localises to the cytoplasm. Hemagglutinating activity is most inhibited by methyl alpha-mannopyranoside. This activity is inhibited to a less extent (about a third of the inhibition of that of methyl alpha-mannopyranoside) by methyl alpha-glucoside, other alpha-glucosides, such as maltose, isomaltose, panose or palatinose, and alpha-glucosides modified at the second position, such as methyl 2-deoxy-alpha-arabinoglucopyranoside or methyl 2-acetamido-2-deoxy alpha-glucopyranoside. Mildly inhibited by free monosaccharides, with glucose presenting at least 20-fold less inhibitory effect on hemagglutinating activity than mannose. Glycoproteins are somewhat inhibitory, the best being asialothyroglobulin and ovomucoid. Not inhibited by isomaltitol, sucrose or trehalose. Mannose-binding lectin. Preferentially binds mannose at concentrations ranging between 5 and 25 mM, but also binds glucose. Has a marked preference for methylated sugar derivatives, such as alpha-MeMan and alpha-MeGlc, at concentration down to 5 mM. Binds to N-glycans, but not to glycolipid-type or other type of glycans. Binds N-linked high-mannose-type glycans. Has a preference for smaller (Man(2)-Man(6)) high-mannose-type glycans to larger (Man(7)-Man(9)) ones. Recognizes both alpha1-6 extended and alpha1-3 extended monoantennary glycans. The addition of alpha1-2Man to the Man-alpha1-3Man-beta branch results in a significant loss of affinity, but beta1-2GlcNAc has some affinity. Has less affinity for biantennary glycans. However, affinity is significant for the biantennary complex-type N-glycans with bisecting GlcNAc. No affinity is observed for tri- and tetra-antennary glycans. Binds bisected glycans of the mouse brain. Selectively binds to bisecting N-glycans which are in back-fold conformation, and does not favor a glycan with an extend conformation. Has hemagglutinating activity against rabbit erythrocytes at 0.3 ug/ml and against trypsin-treated human erythrocytes at 5 ug/ml. Has mitogenic activity in murine cells. The chain is Jacalin-related lectin Calsepa from Calystegia sepium (Hedge bindweed).